Here is a 583-residue protein sequence, read N- to C-terminus: Septin-9 (583 aa).

M1 is modified (N-acetylmethionine). Polar residues predominate over residues 1–14 (MKKSYSGVTRTSSG). The disordered stretch occupies residues 1–49 (MKKSYSGVTRTSSGRLRRLADPTGPALKRSFEVEEIEPPNSTPPRRVQT). The residue at position 30 (S30) is a Phosphoserine. T42 and T49 each carry phosphothreonine. K62 is modified (N6-acetyllysine). The tract at residues 79-105 (DSLSQRSPKPSLRRVELAGAKAPEPMS) is disordered. Phosphoserine occurs at positions 82, 85, and 89. A Phosphothreonine modification is found at T143. Residues 166 to 252 (VETPASKIPE…TPSCVGDMAD (87 aa)) form a disordered region. Polar residues predominate over residues 204–221 (LPSQTLENSEAPMSQLQS). Residue Y276 is modified to Phosphotyrosine. Positions 293-565 (QGFEFNIMVV…EAYRVKRLNE (273 aa)) constitute a Septin-type G domain. The segment at 303–310 (GQSGLGKS) is G1 motif. Position 303–310 (303–310 (GQSGLGKS)) interacts with GTP. Phosphoserine is present on residues S325 and S330. Residues T337, G363, 443–451 (KADTLTLEE), G499, and R514 each bind GTP. Residues 360–363 (DTPG) are G3 motif. A G4 motif region spans residues 442–445 (AKAD).

It belongs to the TRAFAC class TrmE-Era-EngA-EngB-Septin-like GTPase superfamily. Septin GTPase family. Septins polymerize into heterooligomeric protein complexes that form filaments, and associate with cellular membranes, actin filaments, and microtubules. GTPase activity is required for filament formation. Interacts with SEPTIN2, SEPTIN6, SEPTIN7, SEPTIN11 and SEPTIN14. Interacts with RTKN and ARHGEF18. As to expression, expressed in all tissues examined except muscle. Isoforms are differentially expressed in testes, kidney, liver, heart, spleen and brain.

The protein resides in the cytoplasm. It localises to the cytoskeleton. Functionally, filament-forming cytoskeletal GTPase. May play a role in cytokinesis (Potential). The sequence is that of Septin-9 from Mus musculus (Mouse).